A 975-amino-acid chain; its full sequence is Translation initiation factor IF-2 (975 aa).

Disordered regions lie at residues 49–110 (KLSG…APKA) and 193–339 (AAAP…GRGA). Basic residues predominate over residues 63–72 (KKTAARKAAP). 3 stretches are compositionally biased toward low complexity: residues 73 to 94 (KKAA…AKTP), 193 to 202 (AAAPEAPAPQ), and 209 to 225 (VVGT…ASAP). Residues 308-318 (GADRGGRDFDK) are compositionally biased toward basic and acidic residues. The span at 324–336 (GPSAPAAGPAAAG) shows a compositional bias: low complexity. Residues 469–639 (TRPPVVTVMG…KLVAEVAELK (171 aa)) form the tr-type G domain. The G1 stretch occupies residues 478–485 (GHVDHGKT). 478 to 485 (GHVDHGKT) is a GTP binding site. The segment at 503-507 (GITQH) is G2. Residues 525-528 (DTPG) are G3. Residues 525–529 (DTPGH) and 579–582 (NKID) each bind GTP. The segment at 579–582 (NKID) is G4. Residues 615-617 (SAL) are G5.

It belongs to the TRAFAC class translation factor GTPase superfamily. Classic translation factor GTPase family. IF-2 subfamily.

Its subcellular location is the cytoplasm. Its function is as follows. One of the essential components for the initiation of protein synthesis. Protects formylmethionyl-tRNA from spontaneous hydrolysis and promotes its binding to the 30S ribosomal subunits. Also involved in the hydrolysis of GTP during the formation of the 70S ribosomal complex. The protein is Translation initiation factor IF-2 of Bdellovibrio bacteriovorus (strain ATCC 15356 / DSM 50701 / NCIMB 9529 / HD100).